The sequence spans 306 residues: Brix domain-containing protein C4F8.04 (306 aa).

The interval 16 to 49 is disordered; it reads KALHQKNKDKLERRKERAKEEEKDPEKKRLRLSE. Residues 21–42 show a composition bias toward basic and acidic residues; it reads KNKDKLERRKERAKEEEKDPEK. Residues 94-283 enclose the Brix domain; it reads PKLLVTTSKR…LRMVQKGVWD (190 aa).

The sequence is that of Brix domain-containing protein C4F8.04 from Schizosaccharomyces pombe (strain 972 / ATCC 24843) (Fission yeast).